The chain runs to 349 residues: Protein Wnt-7b (349 aa).

The first 24 residues, 1–24 (MHRNFRKWIFYVFLCFGVLYVKLG), serve as a signal peptide directing secretion. Intrachain disulfides connect C73/C84, C123/C131, C133/C152, C200/C214, and C202/C209. N-linked (GlcNAc...) asparagine glycans are attached at residues N83 and N127. S206 carries O-palmitoleoyl serine; by PORCN lipidation. The disordered linker stretch occupies residues 238 to 266 (VEVVRASRLRQPTFLRIKQLRSYQKPMET). 6 cysteine pairs are disulfide-bonded: C278–C309, C294–C304, C308–C348, C324–C339, C326–C336, and C331–C332. N295 carries an N-linked (GlcNAc...) asparagine glycan.

It belongs to the Wnt family. Forms a soluble 1:1 complex with AFM; this prevents oligomerization and is required for prolonged biological activity. The complex with AFM may represent the physiological form in body fluids. Interacts with FZD1 and FZD10. Interacts with FZD4 (in vitro). Interacts with PORCN. Interacts with glypican GPC3. Interacts (via intrinsically disordered linker region) with RECK; interaction with RECK confers ligand selectivity for Wnt7 in brain endothelial cells and allows these cells to selectively respond to Wnt7. Palmitoleoylation is required for efficient binding to frizzled receptors. Depalmitoleoylation leads to Wnt signaling pathway inhibition.

The protein localises to the secreted. It is found in the extracellular space. The protein resides in the extracellular matrix. Functionally, ligand for members of the frizzled family of seven transmembrane receptors that functions in the canonical Wnt/beta-catenin signaling pathway. Required for normal fusion of the chorion and the allantois during placenta development. Required for central nervous system (CNS) angiogenesis and blood-brain barrier regulation. The chain is Protein Wnt-7b (Wnt7b) from Mus musculus (Mouse).